We begin with the raw amino-acid sequence, 146 residues long: Globin-1 (146 aa).

The 138-residue stretch at 9–146 (QLTADVKKDL…KLVAVVQAAL (138 aa)) folds into the Globin domain. His-101 is a heme b binding site.

The protein belongs to the globin family. In terms of assembly, homodimer.

The protein resides in the cytoplasm. In Anadara broughtonii (Blood clam), this protein is Globin-1.